Consider the following 598-residue polypeptide: Arylsulfatase J (598 aa).

The first 47 residues, 1 to 47 (MAPRDSAEPLPPLSPQAWAWSGKFLAMGALAGFSVLSLLTYGYLCWG), serve as a signal peptide directing secretion. Ca(2+) contacts are provided by aspartate 82, aspartate 83, and cysteine 120. The active-site Nucleophile is the cysteine 120. 3-oxoalanine (Cys) is present on cysteine 120. Residue asparagine 155 is glycosylated (N-linked (GlcNAc...) asparagine). Lysine 174 serves as a coordination point for substrate. Residue histidine 176 is part of the active site. Histidine 267 provides a ligand contact to substrate. Asparagine 304 and asparagine 316 each carry an N-linked (GlcNAc...) asparagine glycan. 2 residues coordinate Ca(2+): aspartate 325 and asparagine 326. Lysine 343 serves as a coordination point for substrate. 4 N-linked (GlcNAc...) asparagine glycosylation sites follow: asparagine 429, asparagine 495, asparagine 525, and asparagine 563. Positions 532 to 598 (RYPPKDPRSN…IKCHPSVATG (67 aa)) are disordered. Positions 559–583 (KKKSNKTKAKKMQKKKSKARMRKQL) are enriched in basic residues.

This sequence belongs to the sulfatase family. Requires Ca(2+) as cofactor. The conversion to 3-oxoalanine (also known as C-formylglycine, FGly), of a serine or cysteine residue in prokaryotes and of a cysteine residue in eukaryotes, is critical for catalytic activity.

It localises to the secreted. This is Arylsulfatase J (Arsj) from Mus musculus (Mouse).